A 142-amino-acid polypeptide reads, in one-letter code: Ribosome-binding factor A (142 aa).

Residues 119–142 (EAKQKQHGVETDAEQGETKDEGDK) form a disordered region.

This sequence belongs to the RbfA family. In terms of assembly, monomer. Binds 30S ribosomal subunits, but not 50S ribosomal subunits or 70S ribosomes.

It localises to the cytoplasm. Functionally, one of several proteins that assist in the late maturation steps of the functional core of the 30S ribosomal subunit. Associates with free 30S ribosomal subunits (but not with 30S subunits that are part of 70S ribosomes or polysomes). Required for efficient processing of 16S rRNA. May interact with the 5'-terminal helix region of 16S rRNA. The polypeptide is Ribosome-binding factor A (Shewanella halifaxensis (strain HAW-EB4)).